We begin with the raw amino-acid sequence, 185 residues long: V-type ATP synthase subunit E (185 aa).

It belongs to the V-ATPase E subunit family.

Produces ATP from ADP in the presence of a proton gradient across the membrane. This Deinococcus radiodurans (strain ATCC 13939 / DSM 20539 / JCM 16871 / CCUG 27074 / LMG 4051 / NBRC 15346 / NCIMB 9279 / VKM B-1422 / R1) protein is V-type ATP synthase subunit E.